The following is a 232-amino-acid chain: Small ribosomal subunit protein uS3 (232 aa).

Positions 39–107 constitute a KH type-2 domain; sequence IRKFLKKELF…DVAINIKEEK (69 aa). The tract at residues 213-232 is disordered; that stretch reads QPEPAEEKKGGRRPSRKRGE. Basic residues predominate over residues 222-232; that stretch reads GGRRPSRKRGE.

The protein belongs to the universal ribosomal protein uS3 family. In terms of assembly, part of the 30S ribosomal subunit. Forms a tight complex with proteins S10 and S14.

Functionally, binds the lower part of the 30S subunit head. Binds mRNA in the 70S ribosome, positioning it for translation. The chain is Small ribosomal subunit protein uS3 from Sulfurovum sp. (strain NBC37-1).